Reading from the N-terminus, the 431-residue chain is Nuclear receptor subfamily 1 group I member 2 (431 aa).

The nuclear receptor DNA-binding region spans 35–104; it reads LQICRVCGDK…RLRKCLESGM (70 aa). 2 consecutive NR C4-type zinc fingers follow at residues 38–58 and 74–99; these read CRVCGDKANGYHFNVMTCEGC and CPFRKGTCEITRKTRRQCQACRLRKC. A Bipartite nuclear localization signal motif is present at residues 63–89; that stretch reads RRAMKRNVRLRCPFRKGTCEITRKTRR. A hinge region spans residues 105-142; sequence KKEMIMSDAAVEQRRALIKRKKREKIEAPPPGGQGLTE. Residues 143–430 enclose the NR LBD domain; that stretch reads EQQALIQELM…LMQELFSSTD (288 aa). Hyperforin-binding positions include serine 244 and 282-285; that span reads ILRF.

It belongs to the nuclear hormone receptor family. NR1 subfamily. As to quaternary structure, heterodimer with RXRA. Interacts with NCOA1. Interacts (via domain NR LBD) with CRY1 and CRY2 in a ligand-dependent manner.

It localises to the nucleus. In terms of biological role, nuclear receptor that binds and is activated by a variety of endogenous and xenobiotic compounds. Transcription factor that activates the transcription of multiple genes involved in the metabolism and secretion of potentially harmful xenobiotics, endogenous compounds and drugs. Response to specific ligands is species-specific, due to differences in the ligand-binding domain. Binds to a response element in the promoters of the CYP3A4 and ABCB1/MDR1 genes. Activated by naturally occurring steroids such as pregnenolone and progesterone, the cholesterol metabolite 5-beta-cholestane-3-alpha,7-alpha,12-alpha-triol, synthetic glucocorticoids and antiglucocorticoids and 16-alpha-carbonitrile (PCN). This chain is Nuclear receptor subfamily 1 group I member 2 (Nr1i2), found in Mus musculus (Mouse).